The sequence spans 282 residues: MRTVHSLKELRTILRGYRQQGKTIGLVPTMGNLHEGHISLVRKAAEASDIVVTSIFVNPMQFGANEDLDTYPRTLVEDQEKLAAAGNTLVFAPGVEEIYPEGLANQTKVVVPEVSEGHCGASRPGHFEGVATVVTMLFNMVQPDIAVFGEKDFQQLAVIRKLARDLMIPVEVIGAPTVREDDGLAKSSRNGYLSEQERGIAPVVFRTLRHTADQLAQGRTDYSILEQEARDALSEAGLRPDYFNIVNSLTLKPASKDDRELTLLVAAFLGTTRLIDNLSITR.

Residue 30 to 37 (MGNLHEGH) coordinates ATP. The active-site Proton donor is the His37. Gln61 serves as a coordination point for (R)-pantoate. Beta-alanine is bound at residue Gln61. 149 to 152 (GEKD) contacts ATP. Gln155 serves as a coordination point for (R)-pantoate. ATP-binding positions include Val178 and 186–189 (KSSR).

Belongs to the pantothenate synthetase family. In terms of assembly, homodimer.

Its subcellular location is the cytoplasm. The enzyme catalyses (R)-pantoate + beta-alanine + ATP = (R)-pantothenate + AMP + diphosphate + H(+). Its pathway is cofactor biosynthesis; (R)-pantothenate biosynthesis; (R)-pantothenate from (R)-pantoate and beta-alanine: step 1/1. Functionally, catalyzes the condensation of pantoate with beta-alanine in an ATP-dependent reaction via a pantoyl-adenylate intermediate. The chain is Pantothenate synthetase from Marinobacter nauticus (strain ATCC 700491 / DSM 11845 / VT8) (Marinobacter aquaeolei).